We begin with the raw amino-acid sequence, 485 residues long: Glutamate mutase epsilon subunit (485 aa).

An L-glutamate-binding site is contributed by R66. Residue G68 participates in adenosylcob(III)alamin binding. L-glutamate is bound at residue R100. Residue N123 coordinates adenosylcob(III)alamin. L-glutamate is bound by residues 149–150 (RH), E171, and Y177. P180 lines the adenosylcob(III)alamin pocket. Y181 contacts L-glutamate. Adenosylcob(III)alamin-binding residues include F297, K326, E330, and I334.

The protein belongs to the methylaspartate mutase GlmE subunit family. As to quaternary structure, heterotetramer composed of 2 epsilon subunits (GlmE) and 2 sigma subunits (GlmS). GlmE exists as a homodimer and GlmS as a monomer. The cofactor is adenosylcob(III)alamin.

It carries out the reaction (2S,3S)-3-methyl-L-aspartate = L-glutamate. Its pathway is amino-acid degradation; L-glutamate degradation via mesaconate pathway; acetate and pyruvate from L-glutamate: step 1/4. In terms of biological role, catalyzes the carbon skeleton rearrangement of L-glutamate to L-threo-3-methylaspartate ((2S,3S)-3-methylaspartate). The polypeptide is Glutamate mutase epsilon subunit (Treponema denticola (strain ATCC 35405 / DSM 14222 / CIP 103919 / JCM 8153 / KCTC 15104)).